The primary structure comprises 369 residues: Anhydro-N-acetylmuramic acid kinase (369 aa).

11–18 (GTSMDAVD) serves as a coordination point for ATP.

It belongs to the anhydro-N-acetylmuramic acid kinase family.

It catalyses the reaction 1,6-anhydro-N-acetyl-beta-muramate + ATP + H2O = N-acetyl-D-muramate 6-phosphate + ADP + H(+). It functions in the pathway amino-sugar metabolism; 1,6-anhydro-N-acetylmuramate degradation. Its pathway is cell wall biogenesis; peptidoglycan recycling. Catalyzes the specific phosphorylation of 1,6-anhydro-N-acetylmuramic acid (anhMurNAc) with the simultaneous cleavage of the 1,6-anhydro ring, generating MurNAc-6-P. Is required for the utilization of anhMurNAc either imported from the medium or derived from its own cell wall murein, and thus plays a role in cell wall recycling. The protein is Anhydro-N-acetylmuramic acid kinase of Idiomarina loihiensis (strain ATCC BAA-735 / DSM 15497 / L2-TR).